A 211-amino-acid polypeptide reads, in one-letter code: MPGRERRDGGRSADDNKQNDRNERRGGGRRDDRRNQQQDERSQYIERVVTINRVSKVVKGGRRFSFTALVIVGDGKGMVGVGYGKAKEVPAAIQKGAEEARKNFFRVPMVNGTITHPVQGEKAAGIVMLKPAAPGTGVIAGGAARPVLECAGIQDILSKSLGSDNAINVVHATVDGLKQLVRPEEVAARRGKTIEEVAPARILRARAGQEA.

A disordered region spans residues 1-41 (MPGRERRDGGRSADDNKQNDRNERRGGGRRDDRRNQQQDER). In terms of domain architecture, S5 DRBM spans 44-107 (YIERVVTINR…EEARKNFFRV (64 aa)).

Belongs to the universal ribosomal protein uS5 family. As to quaternary structure, part of the 30S ribosomal subunit. Contacts proteins S4 and S8.

With S4 and S12 plays an important role in translational accuracy. In terms of biological role, located at the back of the 30S subunit body where it stabilizes the conformation of the head with respect to the body. The protein is Small ribosomal subunit protein uS5 of Corynebacterium glutamicum (strain R).